The primary structure comprises 437 residues: Acyl-coenzyme A thioesterase 2, chloroplastic (437 aa).

A chloroplast-targeting transit peptide spans 1 to 13 (MDLSSSPNHPITV). 2 consecutive HotDog ACOT-type domains span residues 89 to 211 (ILYN…RDSK) and 287 to 404 (RDTR…RPEA).

It belongs to the acyl coenzyme A hydrolase family. In terms of tissue distribution, mostly expressed at low levels in glandular trichomes (lupulin glands), and, to a lower extent, in stems, leaves, flowers and cones.

The protein localises to the plastid. The protein resides in the chloroplast. In terms of biological role, acyl-CoA thioesterases are a group of enzymes that catalyze the hydrolysis of acyl-CoAs to the free fatty acid and coenzyme A (CoASH), providing the potential to regulate intracellular levels of acyl-CoAs, free fatty acids and CoASH. In Humulus lupulus (European hop), this protein is Acyl-coenzyme A thioesterase 2, chloroplastic.